A 442-amino-acid chain; its full sequence is MENAKMNSLIAQYPLVKDLVALKETTWFNPGTTSLAEGLPYVGLTEQDVQDAHARLSRFAPYLAKAFPETAASGGIIESELAAIPAMQKRLEKEYQQPISGQLLLKKDSHLPISGSIKARGGIYEVLAHAEKLALEAGLLTLEDDYSKLLSPEFKQFFSQYSIAVGSTGNLGLSIGIMSARIGFKVTVHMSADARAWKKAKLRSHGVTVVEYEQDYGVAVEEGRKAAQSDPNCFFIDDENSRTLFLGYSVAGQRLKAQFAQQGRIVDADNPLFVYLPCGVGGGPGGVAFGLKLAFGDHVHCFFAEPTHSPCMLLGVHTGLHDQISVQDIGIDNLTAADGLAVGRASGFVGRAMERLLDGFYTLSDQTMYDMLGWLAQEEGIRLEPSALAGMAGPQRVCASVSYQQIHGFSAEQLRNATHLVWATGGGMVPEEEMNQYLAKGR.

K118 carries the post-translational modification N6-(pyridoxal phosphate)lysine.

Belongs to the serine/threonine dehydratase family. DsdA subfamily. As to quaternary structure, monomer. It depends on pyridoxal 5'-phosphate as a cofactor.

It catalyses the reaction D-serine = pyruvate + NH4(+). This is D-serine dehydratase from Escherichia fergusonii (strain ATCC 35469 / DSM 13698 / CCUG 18766 / IAM 14443 / JCM 21226 / LMG 7866 / NBRC 102419 / NCTC 12128 / CDC 0568-73).